The following is a 156-amino-acid chain: Ribonuclease H (156 aa).

An RNase H type-1 domain is found at 2–144; it reads TMKNVQAFTD…CDVLARTQAS (143 aa). Residues Asp11, Glu49, Asp71, and Asp136 each contribute to the Mg(2+) site.

This sequence belongs to the RNase H family. Monomer. The cofactor is Mg(2+).

It is found in the cytoplasm. The catalysed reaction is Endonucleolytic cleavage to 5'-phosphomonoester.. In terms of biological role, endonuclease that specifically degrades the RNA of RNA-DNA hybrids. The chain is Ribonuclease H from Nitratidesulfovibrio vulgaris (strain DSM 19637 / Miyazaki F) (Desulfovibrio vulgaris).